A 148-amino-acid chain; its full sequence is D-aminoacyl-tRNA deacylase (148 aa).

A Gly-cisPro motif, important for rejection of L-amino acids motif is present at residues 137 to 138 (GP).

Belongs to the DTD family. As to quaternary structure, homodimer.

Its subcellular location is the cytoplasm. The catalysed reaction is glycyl-tRNA(Ala) + H2O = tRNA(Ala) + glycine + H(+). It catalyses the reaction a D-aminoacyl-tRNA + H2O = a tRNA + a D-alpha-amino acid + H(+). Its function is as follows. An aminoacyl-tRNA editing enzyme that deacylates mischarged D-aminoacyl-tRNAs. Also deacylates mischarged glycyl-tRNA(Ala), protecting cells against glycine mischarging by AlaRS. Acts via tRNA-based rather than protein-based catalysis; rejects L-amino acids rather than detecting D-amino acids in the active site. By recycling D-aminoacyl-tRNA to D-amino acids and free tRNA molecules, this enzyme counteracts the toxicity associated with the formation of D-aminoacyl-tRNA entities in vivo and helps enforce protein L-homochirality. This is D-aminoacyl-tRNA deacylase from Lacticaseibacillus casei (strain BL23) (Lactobacillus casei).